The sequence spans 385 residues: UPF0284 protein PMT9312_0438 (385 aa).

It belongs to the UPF0284 family.

In Prochlorococcus marinus (strain MIT 9312), this protein is UPF0284 protein PMT9312_0438.